The following is a 198-amino-acid chain: Recombination protein RecR (198 aa).

Residues 58-73 (CSVCNNLTEKDPCDFC) form a C4-type zinc finger. The 95-residue stretch at 81–175 (NLICVVESPK…KVTRIAHGLP (95 aa)) folds into the Toprim domain.

It belongs to the RecR family.

Functionally, may play a role in DNA repair. It seems to be involved in an RecBC-independent recombinational process of DNA repair. It may act with RecF and RecO. This chain is Recombination protein RecR, found in Halothermothrix orenii (strain H 168 / OCM 544 / DSM 9562).